We begin with the raw amino-acid sequence, 130 residues long: MLRRTVSNFAMSPYMLFISDLAKTGKLKGIRTPGKFVGKKYRQLSAKEKAALQQRAKQASTPAMTAYRRMAHREMSNKSVPIEQRRANLTKKWNETKQAQRAKAQKAQKKPKSAKSKVKKAAKKAKKSKK.

Positions 1-10 (MLRRTVSNFA) are excised as a propeptide. The segment at 95 to 130 (ETKQAQRAKAQKAQKKPKSAKSKVKKAAKKAKKSKK) is disordered. Residues 103 to 130 (KAQKAQKKPKSAKSKVKKAAKKAKKSKK) are compositionally biased toward basic residues.

Belongs to the KAP family. In terms of assembly, associates with the kinetoplast DNA network.

It localises to the mitochondrion matrix. It is found in the kinetoplast. Functionally, histone H1-like DNA-binding protein involved in the organization and segregation of kinetoplast DNA (kDNA). The mitochondrial DNA of kinetoplastid protozoa consists of about 5,000 minicircles and 20 to 30 maxicircles. These circular DNAs are held together by catenation into a highly organized compact disk structure referred to as a kinetoplast DNA (kDNA) network. Binds preferentially to a specific fragment of minicircle DNA and is able to compact kDNA networks through DNA charge neutralization and condensation. The sequence is that of kinetoplast-associated protein 2-2 (KAP2-2) from Crithidia fasciculata.